A 156-amino-acid polypeptide reads, in one-letter code: Crossover junction endodeoxyribonuclease RuvC (156 aa).

Active-site residues include aspartate 7, glutamate 67, and aspartate 140. Positions 7, 67, and 140 each coordinate Mg(2+).

The protein belongs to the RuvC family. Homodimer which binds Holliday junction (HJ) DNA. The HJ becomes 2-fold symmetrical on binding to RuvC with unstacked arms; it has a different conformation from HJ DNA in complex with RuvA. In the full resolvosome a probable DNA-RuvA(4)-RuvB(12)-RuvC(2) complex forms which resolves the HJ. Requires Mg(2+) as cofactor.

It localises to the cytoplasm. The enzyme catalyses Endonucleolytic cleavage at a junction such as a reciprocal single-stranded crossover between two homologous DNA duplexes (Holliday junction).. Functionally, the RuvA-RuvB-RuvC complex processes Holliday junction (HJ) DNA during genetic recombination and DNA repair. Endonuclease that resolves HJ intermediates. Cleaves cruciform DNA by making single-stranded nicks across the HJ at symmetrical positions within the homologous arms, yielding a 5'-phosphate and a 3'-hydroxyl group; requires a central core of homology in the junction. The consensus cleavage sequence is 5'-(A/T)TT(C/G)-3'. Cleavage occurs on the 3'-side of the TT dinucleotide at the point of strand exchange. HJ branch migration catalyzed by RuvA-RuvB allows RuvC to scan DNA until it finds its consensus sequence, where it cleaves and resolves the cruciform DNA. The sequence is that of Crossover junction endodeoxyribonuclease RuvC from Rickettsia felis (strain ATCC VR-1525 / URRWXCal2) (Rickettsia azadi).